Reading from the N-terminus, the 105-residue chain is Thioredoxin (105 aa).

The Thioredoxin domain maps to 2–105; sequence VKQIDSKDAF…KLEATINEFV (104 aa). Lysine 3 carries the N6-acetyllysine modification. Lysine 8 bears the N6-succinyllysine mark. Catalysis depends on nucleophile residues cysteine 32 and cysteine 35. The cysteines at positions 32 and 35 are disulfide-linked. N6-acetyllysine is present on lysine 39. S-nitrosocysteine is present on residues cysteine 62 and cysteine 69. At cysteine 73 the chain carries S-nitrosocysteine; alternate. An N6-acetyllysine; alternate modification is found at lysine 94. An N6-succinyllysine; alternate modification is found at lysine 94.

Belongs to the thioredoxin family. Homodimer; disulfide-linked. Interacts with TXNIP through the redox-active site. Interacts with MAP3K5 and CASP3. Interacts with APEX1; the interaction stimulates the FOS/JUN AP-1 DNA-binding activity in a redox-dependent manner. Post-translationally, in the fully reduced protein, both Cys-69 and Cys-73 are nitrosylated in response to nitric oxide (NO). When two disulfide bonds are present in the protein, only Cys-73 is nitrosylated. Cys-73 can serve as donor for nitrosylation of target proteins.

It is found in the nucleus. The protein resides in the cytoplasm. The protein localises to the secreted. Its function is as follows. Participates in various redox reactions through the reversible oxidation of its active center dithiol to a disulfide and catalyzes dithiol-disulfide exchange reactions. Plays a role in the reversible S-nitrosylation of cysteine residues in target proteins, and thereby contributes to the response to intracellular nitric oxide. Nitrosylates the active site Cys of CASP3 in response to nitric oxide (NO), and thereby inhibits caspase-3 activity. Induces the FOS/JUN AP-1 DNA binding activity in ionizing radiation (IR) cells through its oxidation/reduction status and stimulates AP-1 transcriptional activity. This is Thioredoxin (TXN) from Callithrix jacchus (White-tufted-ear marmoset).